A 554-amino-acid chain; its full sequence is Solute carrier family 22 member 1 (554 aa).

The Cytoplasmic portion of the chain corresponds to 1–21 (MPTVDDILEQVGESGWFQKQA). A helical membrane pass occupies residues 22–42 (FLILCLLSAAFAPICVGIVFL). At 43 to 149 (GFTPDHHCQS…LVCADSWKLD (107 aa)) the chain is on the extracellular side. Asn-71 carries an N-linked (GlcNAc...) asparagine glycan. A helical transmembrane segment spans residues 150–170 (LFQSCLNAGFLFGSLGVGYFA). Over 171–176 (DRFGRK) the chain is Cytoplasmic. The helical transmembrane segment at 177 to 197 (LCLLGTVLVNAVSGVLMAFSP) threads the bilayer. Topologically, residues 198–206 (NYMSMLLFR) are extracellular. A helical membrane pass occupies residues 207-229 (LLQGLVSKGNWMAGYTLITEFVG). The Cytoplasmic segment spans residues 230 to 235 (SGSRRT). A helical transmembrane segment spans residues 236-256 (VAIMYQMAFTVGLVALTGLAY). Topologically, residues 257–262 (ALPHWR) are extracellular. The chain crosses the membrane as a helical span at residues 263–283 (WLQLAVSLPTFLFLLYYWCVP). The Proline-rich sequence motif lies at 283-287 (PESPR). Residues 284–347 (ESPRWLLSQK…FRTPRLRKRT (64 aa)) lie on the Cytoplasmic side of the membrane. Phosphoserine is present on Ser-333. Residues 348-368 (FILMYLWFTDSVLYQGLILHM) traverse the membrane as a helical segment. Residues 369-376 (GATSGNLY) lie on the Extracellular side of the membrane. A helical transmembrane segment spans residues 377–397 (LDFLYSALVEIPGAFIALITI). The Cytoplasmic segment spans residues 398–402 (DRVGR). The chain crosses the membrane as a helical span at residues 403–423 (IYPMAMSNLLAGAACLVMIFI). Residues 424–431 (SPDLHWLN) lie on the Extracellular side of the membrane. A helical membrane pass occupies residues 432-452 (IIIMCVGRMGITIAIQMICLV). Residues 453–464 (NAELYPTFVRNL) are Cytoplasmic-facing. Residues 465–485 (GVMVCSSLCDIGGIITPFIVF) traverse the membrane as a helical segment. The Extracellular portion of the chain corresponds to 486 to 492 (RLREVWQ). A helical membrane pass occupies residues 493–513 (ALPLILFAVLGLLAAGVTLLL). Topologically, residues 514 to 554 (PETKGVALPETMKDAENLGRKAKPKENTIYLKVQTSEPSGT) are cytoplasmic. A Phosphothreonine modification is found at Thr-541.

The protein belongs to the major facilitator (TC 2.A.1) superfamily. Organic cation transporter (TC 2.A.1.19) family. In terms of processing, phosphorylated. Widely expressed with high level in liver. In liver, expressed around the central vein. Expressed in kidney. Expressed in small intestine enterocytes. Localized to peritubular myoid cells, Leydig cells and moderately to the basal membrane of Sertoli cells in testes. Expressed in tracheal and bronchial ciliated epithelium in the respiratory tract. Also expressed in skeletal muscle, stomach, spleen, heart, placentacolon, brain, granulycytes and lympohocytes. In terms of tissue distribution, expressed in liver and in glial cell lines. As to expression, expressed in glial cell lines. Not expressed in liver.

It is found in the basolateral cell membrane. The protein resides in the apical cell membrane. The protein localises to the lateral cell membrane. Its subcellular location is the basal cell membrane. It localises to the cell membrane. The catalysed reaction is 1-methylnicotinamide(out) = 1-methylnicotinamide(in). It catalyses the reaction dopamine(out) = dopamine(in). It carries out the reaction serotonin(out) = serotonin(in). The enzyme catalyses (R)-adrenaline(out) = (R)-adrenaline(in). The catalysed reaction is histamine(out) = histamine(in). It catalyses the reaction guanidine(out) = guanidine(in). It carries out the reaction acetylcholine(in) = acetylcholine(out). The enzyme catalyses thiamine(in) = thiamine(out). The catalysed reaction is agmatine(out) = agmatine(in). It catalyses the reaction putrescine(out) = putrescine(in). It carries out the reaction spermidine(in) = spermidine(out). The enzyme catalyses L-histidyl-L-proline diketopiperazine(in) = L-histidyl-L-proline diketopiperazine(out). The catalysed reaction is (R)-salsolinol(in) = (R)-salsolinol(out). It catalyses the reaction prostaglandin F2alpha(out) = prostaglandin F2alpha(in). It carries out the reaction prostaglandin E2(out) = prostaglandin E2(in). Its activity is regulated as follows. Phosphorylation of the transporter leads to changes in its substrate affinity, resulting in a regulation of the transport activity. In contrast with rat ortholog, ASP uptake is inhibited by protein kinase A (PKA) and C (PKC) activation. ASP uptake is also endogenously activated by calmodulin, the calmodulin-dependent kinase II and LCK tyrosine kinase. Inhibited by cGMP, most likely through a cGMP-binding protein that interacts with OCT1. In terms of biological role, electrogenic voltage-dependent transporter that mediates the transport of a variety of organic cations such as endogenous bioactive amines, cationic drugs and xenobiotics. Functions as a pH- and Na(+)-independent, bidirectional transporter. Cation cellular uptake or release is driven by the electrochemical potential (i.e. membrane potential and concentration gradient) and substrate selectivity. Hydrophobicity is a major requirement for recognition in polyvalent substrates and inhibitors. Primarily expressed at the basolateral membrane of hepatocytes and proximal tubules and involved in the uptake and disposition of cationic compounds by hepatic and renal clearance from the blood flow. Most likely functions as an uptake carrier in enterocytes contributing to the intestinal elimination of organic cations from the systemic circulation. Transports endogenous monoamines such as N-1-methylnicotinamide (NMN), guanidine, histamine, neurotransmitters dopamine, serotonin and adrenaline. Also transports natural polyamines such as spermidine, agmatine and putrescine at low affinity, but relatively high turnover. Involved in the hepatic uptake of vitamin B1/thiamine, hence regulating hepatic lipid and energy metabolism. Mediates the bidirectional transport of acetylcholine (ACh) at the apical membrane of ciliated cell in airway epithelium, thereby playing a role in luminal release of ACh from bronchial epithelium. Transports dopaminergic neuromodulators cyclo(his-pro) and salsolinol with lower efficency. Also capable of transporting non-amine endogenous compounds such as prostaglandin E2 (PGE2) and prostaglandin F2-alpha (PGF2-alpha). May contribute to the transport of cationic compounds in testes across the blood-testis-barrier. Also involved in the uptake of xenobiotics tributylmethylammonium (TBuMA), quinidine, N-methyl-quinine (NMQ), N-methyl-quinidine (NMQD) N-(4,4-azo-n-pentyl)-quinuclidine (APQ), azidoprocainamide methoiodide (AMP), N-(4,4-azo-n-pentyl)-21-deoxyajmalinium (APDA) and 4-(4-(dimethylamino)styryl)-N-methylpyridinium (ASP). Its function is as follows. Mediates the uptake of 1-methyl-4-phenylpyridinium (MPP(+)). Functionally, not able to uptake 1-methyl-4-phenylpyridinium (MPP(+)). This Homo sapiens (Human) protein is Solute carrier family 22 member 1.